The following is a 199-amino-acid chain: Proteasome subunit beta type-2-B (199 aa).

Position 1 is an N-acetylmethionine (methionine 1).

The protein belongs to the peptidase T1B family. As to quaternary structure, component of the 20S core complex of the 26S proteasome. The 26S proteasome is composed of a core protease (CP), known as the 20S proteasome, capped at one or both ends by the 19S regulatory particle (RP/PA700). The 20S proteasome core is composed of 28 subunits that are arranged in four stacked rings, resulting in a barrel-shaped structure. The two end rings are each formed by seven alpha subunits, and the two central rings are each formed by seven beta subunits. The catalytic chamber with the active sites is on the inside of the barrel. As to expression, ubiquitous low levels, higher expression in siliques and flowers.

Its subcellular location is the cytoplasm. The protein resides in the nucleus. Functionally, non-catalytic component of the proteasome, a multicatalytic proteinase complex which is characterized by its ability to cleave peptides with Arg, Phe, Tyr, Leu, and Glu adjacent to the leaving group at neutral or slightly basic pH. The proteasome has an ATP-dependent proteolytic activity. In Arabidopsis thaliana (Mouse-ear cress), this protein is Proteasome subunit beta type-2-B (PBD2).